The following is a 381-amino-acid chain: 4-hydroxy-3-methylbut-2-en-1-yl diphosphate synthase (flavodoxin) (381 aa).

The [4Fe-4S] cluster site is built by cysteine 280, cysteine 283, cysteine 315, and glutamate 322.

Belongs to the IspG family. The cofactor is [4Fe-4S] cluster.

It carries out the reaction (2E)-4-hydroxy-3-methylbut-2-enyl diphosphate + oxidized [flavodoxin] + H2O + 2 H(+) = 2-C-methyl-D-erythritol 2,4-cyclic diphosphate + reduced [flavodoxin]. Its pathway is isoprenoid biosynthesis; isopentenyl diphosphate biosynthesis via DXP pathway; isopentenyl diphosphate from 1-deoxy-D-xylulose 5-phosphate: step 5/6. Its function is as follows. Converts 2C-methyl-D-erythritol 2,4-cyclodiphosphate (ME-2,4cPP) into 1-hydroxy-2-methyl-2-(E)-butenyl 4-diphosphate. In Clavibacter sepedonicus (Clavibacter michiganensis subsp. sepedonicus), this protein is 4-hydroxy-3-methylbut-2-en-1-yl diphosphate synthase (flavodoxin).